A 132-amino-acid chain; its full sequence is Ribosome-binding factor A (132 aa).

It belongs to the RbfA family. In terms of assembly, monomer. Binds 30S ribosomal subunits, but not 50S ribosomal subunits or 70S ribosomes.

The protein resides in the cytoplasm. One of several proteins that assist in the late maturation steps of the functional core of the 30S ribosomal subunit. Associates with free 30S ribosomal subunits (but not with 30S subunits that are part of 70S ribosomes or polysomes). Required for efficient processing of 16S rRNA. May interact with the 5'-terminal helix region of 16S rRNA. This is Ribosome-binding factor A from Burkholderia multivorans (strain ATCC 17616 / 249).